The sequence spans 141 residues: Large ribosomal subunit protein uL11 (141 aa).

It belongs to the universal ribosomal protein uL11 family. In terms of assembly, part of the ribosomal stalk of the 50S ribosomal subunit. Interacts with L10 and the large rRNA to form the base of the stalk. L10 forms an elongated spine to which L12 dimers bind in a sequential fashion forming a multimeric L10(L12)X complex. In terms of processing, one or more lysine residues are methylated.

Its function is as follows. Forms part of the ribosomal stalk which helps the ribosome interact with GTP-bound translation factors. This Streptococcus pneumoniae serotype 2 (strain D39 / NCTC 7466) protein is Large ribosomal subunit protein uL11.